The chain runs to 85 residues: Putative membrane protein insertion efficiency factor (85 aa).

Residues 66–85 are disordered; that stretch reads PLNSGGDDPVPPKLDDNREH.

This sequence belongs to the UPF0161 family.

The protein localises to the cell inner membrane. Functionally, could be involved in insertion of integral membrane proteins into the membrane. This is Putative membrane protein insertion efficiency factor from Yersinia pestis bv. Antiqua (strain Antiqua).